A 236-amino-acid polypeptide reads, in one-letter code: MSYNLTDPYEIARYIKEAKKSTPIKAYIEGELSNCDFTNIEKFNSGDLYILFGESEEILVIIEKNKDKIKNCRIEQDRRKSAIPLLDMLKINARIEPGAIIRDKVIIGENSVIMMGAVINIGAEIGEGTMVDMNAVVGARGKLGKNVHLGAGAVVAGVLEPPSSDPCTIEDNVLIGANAVILEGIKIGKGSVVAAGSIVTTDVPENVVVAGAPAKIIKEVDVKTKDKTKLLDDLRK.

Belongs to the transferase hexapeptide repeat family. DapH subfamily.

It carries out the reaction (S)-2,3,4,5-tetrahydrodipicolinate + acetyl-CoA + H2O = L-2-acetamido-6-oxoheptanedioate + CoA. It participates in amino-acid biosynthesis; L-lysine biosynthesis via DAP pathway; LL-2,6-diaminopimelate from (S)-tetrahydrodipicolinate (acetylase route): step 1/3. Functionally, catalyzes the transfer of an acetyl group from acetyl-CoA to tetrahydrodipicolinate. The polypeptide is 2,3,4,5-tetrahydropyridine-2,6-dicarboxylate N-acetyltransferase (Clostridium botulinum (strain Loch Maree / Type A3)).